The sequence spans 413 residues: Palmitoyltransferase ZDHHC6 (413 aa).

Residues 1–24 lie on the Cytoplasmic side of the membrane; sequence MGTFCSVVKFENLQELKRLCHWGP. The chain crosses the membrane as a helical span at residues 25 to 45; sequence IIALGVIAICSAMAMIDSVLW. At 46–57 the chain is on the lumenal side; the sequence is YWPLHTTGGSVN. The helical transmembrane segment at 58–78 threads the bilayer; sequence FIMLINWTVMILYNYFNAMFV. The Cytoplasmic portion of the chain corresponds to 79–143; it reads GPGFVPLGWK…NCCGYQNHAS (65 aa). One can recognise a DHHC domain in the interval 99–149; the sequence is QYCKVCQAYKAPRSHHCRKCNRCVMKMDHHCPWINNCCGYQNHASFTLFLL. Cys-129 (S-palmitoyl cysteine intermediate) is an active-site residue. Residues 144-164 traverse the membrane as a helical segment; it reads FTLFLLLAPLGCIHAAFIFVM. The Lumenal portion of the chain corresponds to 165-194; sequence TMYTQLYNRLSFGWNTVKIDMSAARRDPLP. Residues 195–215 form a helical membrane-spanning segment; it reads IIPFGLAAFAATLFALGLALG. Over 216 to 413 the chain is Cytoplasmic; the sequence is TTIAVGMLFF…QAPEGEKKNR (198 aa). In terms of domain architecture, SH3 spans 313-398; that stretch reads VRSVRYKVIE…PRNCVEKCPC (86 aa). S-palmitoyl cysteine attachment occurs at residues Cys-328, Cys-329, and Cys-343. The Di-lysine motif signature appears at 410–413; the sequence is KKNR.

It belongs to the DHHC palmitoyltransferase family. As to quaternary structure, homooligomerizes. Interacts with SELENOK. Post-translationally, palmitoylated at 3 different sites by ZDHHC16. The combination of the different palmitoylation events strongly affects the quaternary assembly of ZDHHC6, its localization, stability and function. Palmitoylation at Cys-328 accelerates the turnover of ZDHHC6. Depalmitoylated by LYPLA2.

It is found in the endoplasmic reticulum membrane. It catalyses the reaction L-cysteinyl-[protein] + hexadecanoyl-CoA = S-hexadecanoyl-L-cysteinyl-[protein] + CoA. The catalysed reaction is L-cysteinyl-[protein] + octadecanoyl-CoA = S-octadecanoyl-L-cysteinyl-[protein] + CoA. Endoplasmic reticulum palmitoyl acyltransferase that mediates palmitoylation of proteins such as AMFR, CALX, ITPR1 and TFRC. Palmitoylates calnexin (CALX), which is required for its association with the ribosome-translocon complex and efficient folding of glycosylated proteins. Mediates palmitoylation of AMFR, promoting AMFR distribution to the peripheral endoplasmic reticulum. Together with SELENOK, palmitoylates ITPR1 in immune cells, leading to regulate ITPR1 stability and function. Stearoyltransferase that mediates stearoylation of TFRC to inhibit TFRC-mediated activation of the JNK pathway and mitochondrial fragmentation. The chain is Palmitoyltransferase ZDHHC6 from Bos taurus (Bovine).